Consider the following 161-residue polypeptide: MKKIGLLFMLCLAALFTIGFPAQQADAAEAPYKASITNISTDGGVYGKINYGQGQYWRVKYNITVSGKLLDQNGQPVPNAPVRFEADTKVGNTTQTASGTTDANGTFEVPMYLGPAAGYYTYYTSVSVHYYDIIPFRVFSGESRLVSTDNSLYHFAYQVRR.

A signal peptide spans 1-27; that stretch reads MKKIGLLFMLCLAALFTIGFPAQQADA.

Its subcellular location is the secreted. This is an uncharacterized protein from Bacillus subtilis (strain 168).